The chain runs to 151 residues: UPF0178 protein CJA_1978 (151 aa).

The protein belongs to the UPF0178 family.

This is UPF0178 protein CJA_1978 from Cellvibrio japonicus (strain Ueda107) (Pseudomonas fluorescens subsp. cellulosa).